We begin with the raw amino-acid sequence, 418 residues long: Voltage-gated ClC-type chloride channel ClcB (418 aa).

Transmembrane regions (helical) follow at residues 5 to 25 (LLIA…FRHA), 54 to 74 (LLTP…WQKF), 146 to 166 (LWIA…PLAG), 168 to 188 (LFIA…PVII), 222 to 242 (ALII…LTLM), 260 to 280 (LALG…VWGN), 291 to 311 (APPL…AVLA), 316 to 336 (GAPG…GMLY), 352 to 372 (LLLG…APIM), and 380 to 400 (MTGE…ASVI).

The protein belongs to the chloride channel (TC 2.A.49) family. ClcB subfamily.

It localises to the cell inner membrane. Functionally, probably acts as an electrical shunt for an outwardly-directed proton pump that is linked to amino acid decarboxylation, as part of the extreme acid resistance (XAR) response. The chain is Voltage-gated ClC-type chloride channel ClcB from Escherichia coli O9:H4 (strain HS).